The primary structure comprises 510 residues: Cytochrome P450 93A3 (510 aa).

The chain crosses the membrane as a helical span at residues 64 to 84; sequence PIIHLFLGSVPCVVASTAEAA. C448 lines the heme pocket.

The protein belongs to the cytochrome P450 family. It depends on heme as a cofactor.

The protein resides in the membrane. The polypeptide is Cytochrome P450 93A3 (CYP93A3) (Glycine max (Soybean)).